Consider the following 920-residue polypeptide: Isoleucine--tRNA ligase (920 aa).

The short motif at 58-68 (PYANGHLHLGH) is the 'HIGH' region element. An L-isoleucyl-5'-AMP-binding site is contributed by glutamate 569. A 'KMSKS' region motif is present at residues 610 to 614 (KMSKS). Position 613 (lysine 613) interacts with ATP. Cysteine 895, cysteine 898, cysteine 910, and cysteine 913 together coordinate Zn(2+).

This sequence belongs to the class-I aminoacyl-tRNA synthetase family. IleS type 1 subfamily. As to quaternary structure, monomer. Zn(2+) is required as a cofactor.

The protein localises to the cytoplasm. It carries out the reaction tRNA(Ile) + L-isoleucine + ATP = L-isoleucyl-tRNA(Ile) + AMP + diphosphate. Functionally, catalyzes the attachment of isoleucine to tRNA(Ile). As IleRS can inadvertently accommodate and process structurally similar amino acids such as valine, to avoid such errors it has two additional distinct tRNA(Ile)-dependent editing activities. One activity is designated as 'pretransfer' editing and involves the hydrolysis of activated Val-AMP. The other activity is designated 'posttransfer' editing and involves deacylation of mischarged Val-tRNA(Ile). The sequence is that of Isoleucine--tRNA ligase from Helicobacter pylori (strain P12).